Reading from the N-terminus, the 314-residue chain is MLDFEKPLFEIRNKIESLKESQDKNDVDLQEEIDMLEASLERETKKIYTNLKPWDRVQIARLQERPTTLDYIPYIFDSFMELHGDRNFRDDPAMIGGIGFLNGRAVTVIGQQRGKDTKDNIYRNFGMAHPEGYRKALRLMKQAEKFNRPIFTFIDTKGAYPGKAAEERGQSESIATNLIEMASLKVPVIAIVIGEGGSGGALGIGIANKVLMLENSTYSVISPEGAAALLWKDSNLAKIAAETMKITAHDIKQLGIIDDVISEPLGGAHKDIEQQALAIKSAFVAQLDSLESLSRDEIANDRFEKFRNIGSYIE.

The CoA carboxyltransferase C-terminal domain maps to 32–289 (EIDMLEASLE…KSAFVAQLDS (258 aa)).

The protein belongs to the AccA family. Acetyl-CoA carboxylase is a heterohexamer composed of biotin carboxyl carrier protein (AccB), biotin carboxylase (AccC) and two subunits each of ACCase subunit alpha (AccA) and ACCase subunit beta (AccD).

The protein localises to the cytoplasm. The catalysed reaction is N(6)-carboxybiotinyl-L-lysyl-[protein] + acetyl-CoA = N(6)-biotinyl-L-lysyl-[protein] + malonyl-CoA. Its pathway is lipid metabolism; malonyl-CoA biosynthesis; malonyl-CoA from acetyl-CoA: step 1/1. Functionally, component of the acetyl coenzyme A carboxylase (ACC) complex. First, biotin carboxylase catalyzes the carboxylation of biotin on its carrier protein (BCCP) and then the CO(2) group is transferred by the carboxyltransferase to acetyl-CoA to form malonyl-CoA. This is Acetyl-coenzyme A carboxylase carboxyl transferase subunit alpha from Staphylococcus aureus (strain NCTC 8325 / PS 47).